A 510-amino-acid chain; its full sequence is Beta-glucosidase 34 (510 aa).

Residues 1-26 form the signal peptide; sequence MGNGGRCMVEVVILLVLMAMSQGCDA. N-linked (GlcNAc...) asparagine glycosylation occurs at Asn-28. Gln-52 contributes to the a beta-D-glucoside binding site. The N-linked (GlcNAc...) asparagine glycan is linked to Asn-120. A beta-D-glucoside contacts are provided by residues His-153 and 198–199; that span reads NE. Glu-199 functions as the Proton donor in the catalytic mechanism. A disulfide bridge links Cys-218 with Cys-226. N-linked (GlcNAc...) asparagine glycosylation is found at Asn-279 and Asn-331. Tyr-342 is an a beta-D-glucoside binding site. N-linked (GlcNAc...) asparagine glycosylation is present at Asn-360. Residues Glu-415, Trp-465, 472–473, and Phe-481 contribute to the a beta-D-glucoside site; that span reads EW. Glu-415 functions as the Nucleophile in the catalytic mechanism.

The protein belongs to the glycosyl hydrolase 1 family.

The catalysed reaction is Hydrolysis of terminal, non-reducing beta-D-glucosyl residues with release of beta-D-glucose.. This chain is Beta-glucosidase 34 (BGLU34), found in Oryza sativa subsp. japonica (Rice).